The sequence spans 135 residues: Small ribosomal subunit protein bS6 (135 aa).

The segment at 99-135 is disordered; sequence EKSAMLSHLDRNAHAGQDEERSRSPRRQRENAIERVE.

The protein belongs to the bacterial ribosomal protein bS6 family.

Functionally, binds together with bS18 to 16S ribosomal RNA. The chain is Small ribosomal subunit protein bS6 from Bartonella tribocorum (strain CIP 105476 / IBS 506).